A 420-amino-acid polypeptide reads, in one-letter code: Homeobox-containing protein 1 (420 aa).

The 32-residue stretch at 18–49 folds into the HNF-p1 domain; the sequence is DEPRFTIEQIDLLQRLRRTGMTKHEILHALET. The tract at residues 56-139 is disordered; that stretch reads EHSDKFGRRS…GKMSPTRYHA (84 aa). Lys-60 is covalently cross-linked (Glycyl lysine isopeptide (Lys-Gly) (interchain with G-Cter in SUMO2)). Composition is skewed to low complexity over residues 64 to 73 and 81 to 93; these read RSSYGGSSYG and ASSSTATASTQTQ. Residues 94–132 show a composition bias toward polar residues; sequence HSGMSPSPSNSYDTSPQPCTTNQNGRENNERLSTSNGKM. Lys-131 is covalently cross-linked (Glycyl lysine isopeptide (Lys-Gly) (interchain with G-Cter in SUMO2)). The 97-residue stretch at 145-241 folds into the POU-specific atypical domain; sequence RSYSFEASEE…PGATLSMRPA (97 aa). A Phosphoserine modification is found at Ser-148. Lys-161 is covalently cross-linked (Glycyl lysine isopeptide (Lys-Gly) (interchain with G-Cter in SUMO2)). The residue at position 170 (Ser-170) is a Phosphoserine. Residues Lys-174, Lys-217, and Lys-310 each participate in a glycyl lysine isopeptide (Lys-Gly) (interchain with G-Cter in SUMO2) cross-link. Positions 267-341 form a DNA-binding region, homeobox; the sequence is RRGSRFTWRK…NRRKEIKRRA (75 aa). The tract at residues 353 to 385 is disordered; the sequence is IDVQSPGGHSNSDDVDGNDYSEQDDSTSHSDHQ. Acidic residues predominate over residues 365–377; the sequence is DDVDGNDYSEQDD. A Glycyl lysine isopeptide (Lys-Gly) (interchain with G-Cter in SUMO1); alternate cross-link involves residue Lys-413. Lys-413 is covalently cross-linked (Glycyl lysine isopeptide (Lys-Gly) (interchain with G-Cter in SUMO2); alternate).

Associates with the telomerase holoenzyme complex. Interacts with DKC1, XRCC6 and COIL. Ubiquitous. Detected in pancreas, brain, spleen, placenta, prostate, thymus, liver, heart, bone marrow, skeletal muscle, stomach, uterus, testis, kidney, ovary, colon, lung, cardiac muscle and thyroid gland.

The protein resides in the nucleus. Its subcellular location is the cytoplasm. It localises to the chromosome. The protein localises to the telomere. It is found in the cajal body. The protein resides in the PML body. Functionally, binds directly to 5'-TTAGGG-3' repeats in telomeric DNA. Associates with the telomerase complex at sites of active telomere processing and positively regulates telomere elongation. Important for TERT binding to chromatin, indicating a role in recruitment of the telomerase complex to telomeres. Also plays a role in the alternative lengthening of telomeres (ALT) pathway in telomerase-negative cells where it promotes formation and/or maintenance of ALT-associated promyelocytic leukemia bodies (APBs). Enhances formation of telomere C-circles in ALT cells, suggesting a possible role in telomere recombination. Might also be involved in the DNA damage response at telomeres. This is Homeobox-containing protein 1 from Homo sapiens (Human).